Reading from the N-terminus, the 314-residue chain is Carbamate kinase (314 aa).

It belongs to the carbamate kinase family. Homodimer.

The protein resides in the cytoplasm. It catalyses the reaction hydrogencarbonate + NH4(+) + ATP = carbamoyl phosphate + ADP + H2O + H(+). Its function is as follows. Carbamate kinase that plays a biosynthetic role in that it produces carbamoyl-phosphate. The polypeptide is Carbamate kinase (cpkA) (Pyrococcus furiosus (strain ATCC 43587 / DSM 3638 / JCM 8422 / Vc1)).